A 291-amino-acid polypeptide reads, in one-letter code: Probable plasmid-partitioning protein ParB (291 aa).

It belongs to the ParB family.

The protein is Probable plasmid-partitioning protein ParB of Deinococcus radiodurans (strain ATCC 13939 / DSM 20539 / JCM 16871 / CCUG 27074 / LMG 4051 / NBRC 15346 / NCIMB 9279 / VKM B-1422 / R1).